We begin with the raw amino-acid sequence, 409 residues long: Tyrosine--tRNA ligase (409 aa).

Residues 54-63 (PTAPDIHLGH) carry the 'HIGH' region motif. Residues 238–242 (KMSKS) carry the 'KMSKS' region motif. K241 serves as a coordination point for ATP. The region spanning 347-407 (QGILRILREA…GKRKFARVKL (61 aa)) is the S4 RNA-binding domain.

This sequence belongs to the class-I aminoacyl-tRNA synthetase family. TyrS type 2 subfamily. As to quaternary structure, homodimer.

The protein resides in the cytoplasm. It catalyses the reaction tRNA(Tyr) + L-tyrosine + ATP = L-tyrosyl-tRNA(Tyr) + AMP + diphosphate + H(+). Functionally, catalyzes the attachment of tyrosine to tRNA(Tyr) in a two-step reaction: tyrosine is first activated by ATP to form Tyr-AMP and then transferred to the acceptor end of tRNA(Tyr). This is Tyrosine--tRNA ligase from Bordetella bronchiseptica (strain ATCC BAA-588 / NCTC 13252 / RB50) (Alcaligenes bronchisepticus).